Consider the following 382-residue polypeptide: Na(+)/H(+) antiporter NhaA 2 (382 aa).

10 helical membrane passes run 11 to 31, 45 to 65, 91 to 111, 116 to 136, 145 to 165, 171 to 191, 197 to 214, 287 to 307, 324 to 344, and 353 to 373; these read FSVP…LDPA, LSFH…IAAV, LGGV…VGLP, GWGI…RMVF, YLLL…ALFY, PVVA…WGLG, SYWP…IGLH, WLVL…FGLL, LLVA…VSGS, and AAAK…MLLG.

It belongs to the NhaA Na(+)/H(+) (TC 2.A.33) antiporter family.

It localises to the cell inner membrane. It catalyses the reaction Na(+)(in) + 2 H(+)(out) = Na(+)(out) + 2 H(+)(in). In terms of biological role, na(+)/H(+) antiporter that extrudes sodium in exchange for external protons. The chain is Na(+)/H(+) antiporter NhaA 2 from Pelobacter propionicus (strain DSM 2379 / NBRC 103807 / OttBd1).